A 43-amino-acid polypeptide reads, in one-letter code: Protein PsbN (43 aa).

Residues 7-27 (VAIFISCLLVSFTGYALYTAF) traverse the membrane as a helical segment.

The protein belongs to the PsbN family.

Its subcellular location is the plastid. It is found in the chloroplast thylakoid membrane. In terms of biological role, may play a role in photosystem I and II biogenesis. In Zygnema circumcarinatum (Green alga), this protein is Protein PsbN.